The following is a 672-amino-acid chain: Nuclear hormone receptor family member nhr-5 (672 aa).

The span at 1–19 shows a compositional bias: low complexity; sequence MSSGGNSSNVNRNSGSSNV. Residues 1–38 are disordered; it reads MSSGGNSSNVNRNSGSSNVITLNDSDEETEDSNLGSSS. The segment at residues 40–115 is a DNA-binding region (nuclear receptor); it reads TNLCKVCGAE…EGMNPAYVRP (76 aa). NR C4-type zinc fingers lie at residues 43–63 and 79–98; these read CKVCGAEKAALHYGALSCVGC and CAANGECTVSVLQKTQCRSC. Positions 155–424 constitute an NR LBD domain; that stretch reads EMRTILMTLL…PLLTDLFGCF (270 aa). The tract at residues 550-577 is disordered; the sequence is NIQGPSHLPQCGSTVTQRPTVPSSTTSS. Over residues 562–577 the composition is skewed to low complexity; that stretch reads STVTQRPTVPSSTTSS.

Belongs to the nuclear hormone receptor family.

It localises to the nucleus. Orphan nuclear receptor. In Caenorhabditis elegans, this protein is Nuclear hormone receptor family member nhr-5 (nhr-5).